We begin with the raw amino-acid sequence, 254 residues long: Probable triosephosphate isomerase 2 (254 aa).

9 to 11 (NMK) provides a ligand contact to substrate. His96 functions as the Electrophile in the catalytic mechanism. Glu168 functions as the Proton acceptor in the catalytic mechanism. Substrate-binding residues include Gly174 and Ser212.

The protein belongs to the triosephosphate isomerase family. As to quaternary structure, homodimer.

Its subcellular location is the cytoplasm. The catalysed reaction is D-glyceraldehyde 3-phosphate = dihydroxyacetone phosphate. Its pathway is carbohydrate biosynthesis; gluconeogenesis. It participates in carbohydrate degradation; glycolysis; D-glyceraldehyde 3-phosphate from glycerone phosphate: step 1/1. In terms of biological role, involved in the gluconeogenesis. Catalyzes stereospecifically the conversion of dihydroxyacetone phosphate (DHAP) to D-glyceraldehyde-3-phosphate (G3P). This Listeria monocytogenes serotype 4b (strain F2365) protein is Probable triosephosphate isomerase 2.